The following is a 1360-amino-acid chain: TRAF2 and NCK-interacting protein kinase (1360 aa).

One can recognise a Protein kinase domain in the interval 25–289 (FELVELVGNG…TEQLMKHPFI (265 aa)). ATP contacts are provided by residues 31-39 (VGNGTYGQV) and Lys54. Asp153 (proton acceptor) is an active-site residue. The residue at position 187 (Thr187) is a Phosphothreonine. Disordered stretches follow at residues 284-347 (MKHP…LPGE), 398-440 (QKEQ…RRRA), and 539-589 (ERSR…RPVD). The segment covering 288–307 (FIRDQPNERQVRIQLKDHID) has biased composition (basic and acidic residues). A mediates interaction with NEDD4 region spans residues 290–1047 (RDQPNERQVR…EIRKYKKRFN (758 aa)). Over residues 317–335 (DETEYEYSGSEEEEEENDS) the composition is skewed to acidic residues. A phosphoserine mark is found at Ser324 and Ser326. Residues Ser560 and Ser570 each carry the phosphoserine modification. Thr581 carries the phosphothreonine modification. Residues Ser600, Ser608, Ser610, and Ser640 each carry the phosphoserine modification. Disordered regions lie at residues 601–801 (QGPA…KAID), 814–878 (LRIE…YNVG), 908–927 (TSGE…AGHI), and 933–998 (VQQS…ESSA). Residues 652 to 669 (RIEKFDRSSWLRQEEDIP) are compositionally biased toward basic and acidic residues. Phosphoserine is present on residues Ser678, Ser680, Ser688, Ser701, Ser707, Ser720, Ser764, Ser766, and Ser769. Over residues 720–755 (SPLQRTSSGSSSSSSTPSSQPSSQGGSQPGSQAGSS) the composition is skewed to low complexity. Basic and acidic residues-rich tracts occupy residues 775 to 789 (EPAK…DITR) and 814 to 827 (LRIE…KKVT). Acidic residues predominate over residues 834–847 (EESESSEEEEEDGE). The span at 908-917 (TSGEKKRSGH) shows a compositional bias: basic and acidic residues. Ser959 carries the phosphoserine modification. The span at 987-996 (TDEDEEDEES) shows a compositional bias: acidic residues. A CNH domain is found at 1047 to 1334 (NSEILCAALW…KFLCERNDKV (288 aa)).

The protein belongs to the protein kinase superfamily. STE Ser/Thr protein kinase family. STE20 subfamily. As to quaternary structure, interacts (via the CNH domain) with RAP2A (GTP-bound form preferentially); the interaction is direct and required for the activation of TNIK by RAP2A. Interacts with NEDD4; recruits RAP2A to NEDD4. Interacts with TRAF2 and NCK. Interacts with TCF7L2/TCF4 and CTNNB1; the interaction is direct. Interacts with TANC1. Autophosphorylated. Autophosphorylation is activated by RAP2A and induces association to the cytoskeletal fraction. In terms of tissue distribution, expressed ubiquitously. Highest levels observed in heart, brain and skeletal muscle. Expressed in normal colonic epithelia and colorectal cancer tissues.

The protein resides in the nucleus. Its subcellular location is the cytoplasm. The protein localises to the recycling endosome. It is found in the cytoskeleton. It carries out the reaction L-seryl-[protein] + ATP = O-phospho-L-seryl-[protein] + ADP + H(+). It catalyses the reaction L-threonyl-[protein] + ATP = O-phospho-L-threonyl-[protein] + ADP + H(+). Its function is as follows. Serine/threonine kinase that acts as an essential activator of the Wnt signaling pathway. Recruited to promoters of Wnt target genes and required to activate their expression. May act by phosphorylating TCF4/TCF7L2. Appears to act upstream of the JUN N-terminal pathway. May play a role in the response to environmental stress. Part of a signaling complex composed of NEDD4, RAP2A and TNIK which regulates neuronal dendrite extension and arborization during development. More generally, it may play a role in cytoskeletal rearrangements and regulate cell spreading. Phosphorylates SMAD1 on Thr-322. Activator of the Hippo signaling pathway which plays a pivotal role in organ size control and tumor suppression by restricting proliferation and promoting apoptosis. MAP4Ks act in parallel to and are partially redundant with STK3/MST2 and STK4/MST2 in the phosphorylation and activation of LATS1/2, and establish MAP4Ks as components of the expanded Hippo pathway. In Homo sapiens (Human), this protein is TRAF2 and NCK-interacting protein kinase.